The chain runs to 1068 residues: Integrator complex subunit 3 homolog (1068 aa).

Disordered stretches follow at residues 916–939 (YPSSSPNKRKRPPKGISVSTSTPS) and 1001–1068 (VGRR…NDSD). Residues serine 1038, serine 1039, serine 1043, and serine 1044 each carry the phosphoserine modification.

Belongs to the Integrator subunit 3 family. In terms of assembly, belongs to the multiprotein complex Integrator, at least composed of IntS1, IntS2, IntS3, IntS4, omd/IntS5, IntS6, defl/IntS7, IntS8, IntS9, IntS10, IntS11, IntS12, asun/IntS13, IntS14 and IntS15. The core complex associates with protein phosphatase 2A subunits mts/PP2A and Pp2A-29B, to form the Integrator-PP2A (INTAC) complex.

The protein resides in the nucleus. Its subcellular location is the cytoplasm. Component of the integrator complex, a multiprotein complex that terminates RNA polymerase II (Pol II) transcription in the promoter-proximal region of genes. The integrator complex provides a quality checkpoint during transcription elongation by driving premature transcription termination of transcripts that are unfavorably configured for transcriptional elongation: the complex terminates transcription by (1) catalyzing dephosphorylation of the C-terminal domain (CTD) of Pol II subunit Polr2A/Rbp1 and Spt5, and (2) degrading the exiting nascent RNA transcript via endonuclease activity. The integrator complex is also involved in the 3'-end processing of the U7 snRNA, and also the spliceosomal snRNAs U1, U2, U4 and U5. The chain is Integrator complex subunit 3 homolog (IntS3) from Drosophila sechellia (Fruit fly).